The sequence spans 155 residues: UPF0260 protein NGR_c07710 (155 aa).

It belongs to the UPF0260 family.

This chain is UPF0260 protein NGR_c07710, found in Sinorhizobium fredii (strain NBRC 101917 / NGR234).